The chain runs to 429 residues: Glutamate-1-semialdehyde 2,1-aminomutase 2 (429 aa).

Lysine 268 carries the N6-(pyridoxal phosphate)lysine modification.

The protein belongs to the class-III pyridoxal-phosphate-dependent aminotransferase family. HemL subfamily. In terms of assembly, homodimer. Requires pyridoxal 5'-phosphate as cofactor.

The protein localises to the cytoplasm. The enzyme catalyses (S)-4-amino-5-oxopentanoate = 5-aminolevulinate. The protein operates within porphyrin-containing compound metabolism; protoporphyrin-IX biosynthesis; 5-aminolevulinate from L-glutamyl-tRNA(Glu): step 2/2. In Bacillus cereus (strain AH820), this protein is Glutamate-1-semialdehyde 2,1-aminomutase 2.